The primary structure comprises 508 residues: Maturase K (508 aa).

Belongs to the intron maturase 2 family. MatK subfamily.

Its subcellular location is the plastid. The protein localises to the chloroplast. Its function is as follows. Usually encoded in the trnK tRNA gene intron. Probably assists in splicing its own and other chloroplast group II introns. The protein is Maturase K of Pelargonium hortorum (Common geranium).